A 269-amino-acid chain; its full sequence is Shikimate dehydrogenase (NADP(+)) (269 aa).

Shikimate contacts are provided by residues 17-19 and T64; that span reads SKS. The active-site Proton acceptor is the K68. An NADP(+)-binding site is contributed by E80. Shikimate-binding residues include N89 and D105. NADP(+)-binding positions include 130–134, 154–159, and M213; these read GAGGA and NRTRAK. Residue Y215 coordinates shikimate. G237 lines the NADP(+) pocket.

It belongs to the shikimate dehydrogenase family. As to quaternary structure, homodimer.

It carries out the reaction shikimate + NADP(+) = 3-dehydroshikimate + NADPH + H(+). Its pathway is metabolic intermediate biosynthesis; chorismate biosynthesis; chorismate from D-erythrose 4-phosphate and phosphoenolpyruvate: step 4/7. Functionally, involved in the biosynthesis of the chorismate, which leads to the biosynthesis of aromatic amino acids. Catalyzes the reversible NADPH linked reduction of 3-dehydroshikimate (DHSA) to yield shikimate (SA). This Neisseria lactamica protein is Shikimate dehydrogenase (NADP(+)).